We begin with the raw amino-acid sequence, 99 residues long: Putative pterin-4-alpha-carbinolamine dehydratase (99 aa).

It belongs to the pterin-4-alpha-carbinolamine dehydratase family.

The catalysed reaction is (4aS,6R)-4a-hydroxy-L-erythro-5,6,7,8-tetrahydrobiopterin = (6R)-L-erythro-6,7-dihydrobiopterin + H2O. The protein is Putative pterin-4-alpha-carbinolamine dehydratase of Bradyrhizobium sp. (strain BTAi1 / ATCC BAA-1182).